The chain runs to 134 residues: Large ribosomal subunit protein uL18 (134 aa).

The protein belongs to the universal ribosomal protein uL18 family. In terms of assembly, part of the 50S ribosomal subunit; part of the 5S rRNA/L5/L18/L25 subcomplex. Contacts the 5S and 23S rRNAs.

This is one of the proteins that bind and probably mediate the attachment of the 5S RNA into the large ribosomal subunit, where it forms part of the central protuberance. The polypeptide is Large ribosomal subunit protein uL18 (Corynebacterium glutamicum (strain ATCC 13032 / DSM 20300 / JCM 1318 / BCRC 11384 / CCUG 27702 / LMG 3730 / NBRC 12168 / NCIMB 10025 / NRRL B-2784 / 534)).